The sequence spans 409 residues: Putative lipoate-protein ligase A (409 aa).

Residues 146 to 330 (GPDNCRLLFY…RFQKTFKVDG (185 aa)) form the BPL/LPL catalytic domain. Residues Arg188, 193–196 (GTVL), and Lys249 each bind ATP. Lys249 is a binding site for (R)-lipoate.

This sequence belongs to the LplA family. Monomer.

It carries out the reaction L-lysyl-[lipoyl-carrier protein] + (R)-lipoate + ATP = N(6)-[(R)-lipoyl]-L-lysyl-[lipoyl-carrier protein] + AMP + diphosphate + H(+). It functions in the pathway protein modification; protein lipoylation via exogenous pathway; protein N(6)-(lipoyl)lysine from lipoate: step 1/2. It participates in protein modification; protein lipoylation via exogenous pathway; protein N(6)-(lipoyl)lysine from lipoate: step 2/2. Its function is as follows. Catalyzes both the ATP-dependent activation of exogenously supplied lipoate to lipoyl-AMP and the transfer of the activated lipoyl onto the lipoyl domains of lipoate-dependent enzymes. The polypeptide is Putative lipoate-protein ligase A (AIM22) (Saccharomyces cerevisiae (strain RM11-1a) (Baker's yeast)).